A 98-amino-acid polypeptide reads, in one-letter code: Cell cycle protein GpsB (98 aa).

A coiled-coil region spans residues 34-71; that stretch reads LDIVIKDYEAFQQELDELRQENARLKRQVEELQKRPTT.

Belongs to the GpsB family. As to quaternary structure, forms polymers through the coiled coil domains. Interacts with PBP1, MreC and EzrA.

The protein localises to the cytoplasm. Divisome component that associates with the complex late in its assembly, after the Z-ring is formed, and is dependent on DivIC and PBP2B for its recruitment to the divisome. Together with EzrA, is a key component of the system that regulates PBP1 localization during cell cycle progression. Its main role could be the removal of PBP1 from the cell pole after pole maturation is completed. Also contributes to the recruitment of PBP1 to the division complex. Not essential for septum formation. The chain is Cell cycle protein GpsB from Geobacillus thermodenitrificans (strain NG80-2).